A 172-amino-acid polypeptide reads, in one-letter code: Adenine phosphoribosyltransferase (172 aa).

It belongs to the purine/pyrimidine phosphoribosyltransferase family. As to quaternary structure, homodimer.

The protein localises to the cytoplasm. It catalyses the reaction AMP + diphosphate = 5-phospho-alpha-D-ribose 1-diphosphate + adenine. It functions in the pathway purine metabolism; AMP biosynthesis via salvage pathway; AMP from adenine: step 1/1. Its function is as follows. Catalyzes a salvage reaction resulting in the formation of AMP, that is energically less costly than de novo synthesis. This Anaeromyxobacter dehalogenans (strain 2CP-1 / ATCC BAA-258) protein is Adenine phosphoribosyltransferase.